We begin with the raw amino-acid sequence, 178 residues long: Gamma-crystallin S (178 aa).

Serine 2 carries the N-acetylserine modification. Residues 2–5 (SKTG) are N-terminal arm. Beta/gamma crystallin 'Greek key' domains follow at residues 6 to 44 (AKIS…RVEG) and 45 to 87 (GTWA…RAVH). The tract at residues 88 to 93 (LSSGGQ) is connecting peptide. Beta/gamma crystallin 'Greek key' domains lie at 94-134 (YKIQ…KVLE) and 135-177 (GTWI…RRIV).

Belongs to the beta/gamma-crystallin family. In terms of assembly, monomer.

In terms of biological role, crystallins are the dominant structural components of the vertebrate eye lens. The chain is Gamma-crystallin S (Crygs) from Rattus norvegicus (Rat).